Here is a 279-residue protein sequence, read N- to C-terminus: Undecaprenyl-diphosphatase (279 aa).

Transmembrane regions (helical) follow at residues 2–22, 44–64, 85–105, 113–133, 163–183, 188–208, 223–243, and 255–275; these read LIIELLKAIFFGIIEGITEWL, AFIEMFNIVIQLGAIIAVMLI, WQLWLKVVIACIPSILIAVPL, FYFMVPIAIALIVYGIAFIWI, VLSIVPGTSRSGATILGAIIL, TVAADFTFFLAIPTMFGYSGL, AQVLILLVASLTAFVVSLLAI, and FTIFGKYRIVLGSLLLIYSFF.

The protein belongs to the UppP family.

Its subcellular location is the cell membrane. It catalyses the reaction di-trans,octa-cis-undecaprenyl diphosphate + H2O = di-trans,octa-cis-undecaprenyl phosphate + phosphate + H(+). In terms of biological role, catalyzes the dephosphorylation of undecaprenyl diphosphate (UPP). Confers resistance to bacitracin. In Streptococcus pyogenes serotype M2 (strain MGAS10270), this protein is Undecaprenyl-diphosphatase.